A 110-amino-acid chain; its full sequence is UPF0060 membrane protein PFL_4337 (110 aa).

4 helical membrane-spanning segments follow: residues 5-25 (LWFF…WMWL), 31-51 (ALWV…LTKV), 59-79 (AYAA…AVVE), and 84-104 (LGSD…ILFG).

This sequence belongs to the UPF0060 family.

It is found in the cell inner membrane. The polypeptide is UPF0060 membrane protein PFL_4337 (Pseudomonas fluorescens (strain ATCC BAA-477 / NRRL B-23932 / Pf-5)).